Reading from the N-terminus, the 387-residue chain is Paralemmin-1 (387 aa).

Met-1 bears the N-acetylmethionine mark. The stretch at 7–104 (ETISQQERLQ…IEELENADTL (98 aa)) forms a coiled coil. Disordered regions lie at residues 22-78 (RRRQ…QEDE) and 98-133 (LENA…DRKA). 2 stretches are compositionally biased toward basic and acidic residues: residues 25 to 41 (QAEV…DRRQ) and 69 to 78 (DMRKQMQEDE). Residue Ser-116 is modified to Phosphoserine. Residues 116–125 (SPGPVVPAPC) show a composition bias toward pro residues. 2 positions are modified to phosphothreonine: Thr-142 and Thr-146. Position 163 is a phosphoserine (Ser-163). Phosphothreonine is present on Thr-244. Phosphoserine is present on Ser-246. Disordered stretches follow at residues 246-297 (SEAG…QEPP) and 334-378 (AAEP…DMKK). The span at 258-273 (GPSEEVVRTTPSRREI) shows a compositional bias: basic and acidic residues. The span at 286–297 (GPPGIQPGQEPP) shows a compositional bias: low complexity. Residues Ser-346 and Ser-369 each carry the phosphoserine modification. 2 S-palmitoyl cysteine lipidation sites follow: Cys-381 and Cys-383. Cys-384 is modified (cysteine methyl ester). Residue Cys-384 is the site of S-farnesyl cysteine attachment. Positions 385–387 (SIM) are cleaved as a propeptide — removed in mature form.

It belongs to the paralemmin family. In terms of assembly, interacts with dopamine receptor DRD3. Phosphorylated.

Its subcellular location is the cell membrane. It localises to the cell projection. The protein resides in the filopodium membrane. It is found in the axon. The protein localises to the dendrite. Its subcellular location is the dendritic spine. It localises to the basolateral cell membrane. The protein resides in the apicolateral cell membrane. In terms of biological role, involved in plasma membrane dynamics and cell process formation. Necessary for axonal and dendritic filopodia induction, for dendritic spine maturation and synapse formation in a palmitoylation-dependent manner. The polypeptide is Paralemmin-1 (PALM) (Sus scrofa (Pig)).